We begin with the raw amino-acid sequence, 243 residues long: Carboxy-S-adenosyl-L-methionine synthase (243 aa).

S-adenosyl-L-methionine contacts are provided by residues Tyr40, 65–67 (GCS), 90–91 (DN), 118–119 (DI), Asn133, and Arg200.

The protein belongs to the class I-like SAM-binding methyltransferase superfamily. Cx-SAM synthase family. Homodimer.

The catalysed reaction is prephenate + S-adenosyl-L-methionine = carboxy-S-adenosyl-L-methionine + 3-phenylpyruvate + H2O. In terms of biological role, catalyzes the conversion of S-adenosyl-L-methionine (SAM) to carboxy-S-adenosyl-L-methionine (Cx-SAM). The protein is Carboxy-S-adenosyl-L-methionine synthase of Shewanella putrefaciens (strain CN-32 / ATCC BAA-453).